The sequence spans 438 residues: Enolase (438 aa).

Residues H159 and E168 each coordinate substrate. The active-site Proton donor is E211. Mg(2+)-binding residues include D246, E297, and D322. The substrate site is built by E297 and D322. The active-site Proton acceptor is the K347. Substrate-binding positions include 374–377 (SHRS) and K398.

This sequence belongs to the enolase family. In terms of assembly, homodimer. Mg(2+) is required as a cofactor.

Its subcellular location is the cytoplasm. The enzyme catalyses (2R)-2-phosphoglycerate = phosphoenolpyruvate + H2O. Its pathway is carbohydrate degradation; glycolysis; pyruvate from D-glyceraldehyde 3-phosphate: step 4/5. The polypeptide is Enolase (ENO1) (Cryphonectria parasitica (Chestnut blight fungus)).